The sequence spans 200 residues: BREX protein BrxB (200 aa).

It belongs to the BrxB family.

Functionally, BREX systems (bacteriophage exclusion) provide immunity against bacteriophage. Part of a type 1 BREX system which protects against dsDNA phage. This system allows phage adsorption but prevents phage DNA replication, without degradation of the phage DNA. Methylation of bacterial DNA by PglX guides self/non-self discrimination. When the brxA-brxB-brxC-pglX-pglZ-brxL genes are transformed into a susceptible E.coli strain (BW25113) they confer very high resistance to infection by bacteriophage VR7 and VpaE1, about 100-fold protection against lambda, T5 and T7 and no protection against RNA phage Qbeta, ssDNA phage M13 or dSDNA phage T4 and VR5. Glycosylated phage DNA is not susceptible to BREX. The BREX system does not confer resistance to lysogenic lambda phage, i.e. prophage that are integrated into the chromosomal DNA and then induced to form phage. This is BREX protein BrxB from Escherichia coli O9:H4 (strain HS).